The chain runs to 785 residues: Endonuclease MutS2 (785 aa).

Position 335 to 342 (335 to 342 (GPNTGGKT)) interacts with ATP. One can recognise a Smr domain in the interval 710-785 (LDLRGERYED…GNGVTIVEFK (76 aa)).

The protein belongs to the DNA mismatch repair MutS family. MutS2 subfamily. Homodimer. Binds to stalled ribosomes, contacting rRNA.

Its function is as follows. Endonuclease that is involved in the suppression of homologous recombination and thus may have a key role in the control of bacterial genetic diversity. Functionally, acts as a ribosome collision sensor, splitting the ribosome into its 2 subunits. Detects stalled/collided 70S ribosomes which it binds and splits by an ATP-hydrolysis driven conformational change. Acts upstream of the ribosome quality control system (RQC), a ribosome-associated complex that mediates the extraction of incompletely synthesized nascent chains from stalled ribosomes and their subsequent degradation. Probably generates substrates for RQC. The polypeptide is Endonuclease MutS2 (Listeria innocua serovar 6a (strain ATCC BAA-680 / CLIP 11262)).